The chain runs to 298 residues: NFU1 iron-sulfur cluster scaffold homolog, mitochondrial (298 aa).

Residues I190–V258 are nifU. Residues C227 and C230 each coordinate [4Fe-4S] cluster. Residues Q279–A288 are compositionally biased toward polar residues. Residues Q279–N298 form a disordered region.

Belongs to the NifU family.

It is found in the mitochondrion. Its function is as follows. Molecular scaffold for [Fe-S] cluster assembly of mitochondrial iron-sulfur proteins. The sequence is that of NFU1 iron-sulfur cluster scaffold homolog, mitochondrial from Drosophila virilis (Fruit fly).